Consider the following 274-residue polypeptide: Ribosomal RNA small subunit methyltransferase A (274 aa).

Positions 28, 30, 55, 77, 103, and 122 each coordinate S-adenosyl-L-methionine.

The protein belongs to the class I-like SAM-binding methyltransferase superfamily. rRNA adenine N(6)-methyltransferase family. RsmA subfamily.

The protein localises to the cytoplasm. It catalyses the reaction adenosine(1518)/adenosine(1519) in 16S rRNA + 4 S-adenosyl-L-methionine = N(6)-dimethyladenosine(1518)/N(6)-dimethyladenosine(1519) in 16S rRNA + 4 S-adenosyl-L-homocysteine + 4 H(+). Specifically dimethylates two adjacent adenosines (A1518 and A1519) in the loop of a conserved hairpin near the 3'-end of 16S rRNA in the 30S particle. May play a critical role in biogenesis of 30S subunits. This chain is Ribosomal RNA small subunit methyltransferase A, found in Rhizobium meliloti (strain 1021) (Ensifer meliloti).